Reading from the N-terminus, the 4299-residue chain is DNA-dependent protein kinase catalytic subunit (4299 aa).

Residues 551–590 are a coiled coil; sequence KDLNSTIKKENNNNNNNKNKNNNNNQTLTKEEISKSIKKL. 4 disordered regions span residues 557–577, 613–633, 878–917, and 1206–1230; these read IKKENNNNNNNKNKNNNNNQT, DENDNNSNSNSNNNNNNDQDN, NSSDSTSGGDIDIDSGGSMGGGGVVPPPSSSSRHRKMKFK, and SSSKNNSNSNSNNNNNNNNNSEDGT. 4 stretches are compositionally biased toward low complexity: residues 562 to 575, 617 to 631, 878 to 893, and 1206 to 1226; these read NNNNNNKNKNNNNN, NNSNSNSNNNNNNDQ, NSSDSTSGGDIDIDSG, and SSSKNNSNSNSNNNNNNNNNS. At Ser2789 the chain carries Phosphoserine; by autocatalysis. 2 positions are modified to phosphothreonine; by autocatalysis: Thr2814 and Thr2822. Over residues 2832-2867 the composition is skewed to low complexity; sequence SSSQSYGGTNNNTGSSQLSSSSSSSGSQSSSQNNSS. 2 disordered regions span residues 2832-2881 and 3535-3559; these read SSSQ…PKLI and TTSSSPSLSISSSSSPYSSTSSSSQ. Positions 3031–3707 constitute an FAT domain; it reads KIKDISLNSN…YFPFKISSEQ (677 aa). One can recognise a PI3K/PI4K catalytic domain in the interval 3887–4226; it reads FDTNVLVMGS…AKKKLELVNP (340 aa). Residues 3893–3899 form a G-loop region; that stretch reads VMGSLRK. Residues 4092–4100 are catalytic loop; sequence GIGDRHLEN. Positions 4112–4137 are activation loop; it reads GIDFGHAFGTATQFLPIPELMPFRLT. Positions 4267–4299 constitute an FATC domain; the sequence is VCSSVKEQIDCLIDQSTDPNILSRAWVGWNGAL.

It belongs to the PI3/PI4-kinase family. DNAPK subfamily. In terms of processing, may be phosphorylated upon DNA damage. Could be autophosphorylated. Autophosphorylation induces a conformational change that leads to remodeling of the DNA-PK complex, requisite for efficient end processing and DNA repair. Autophosphorylated on Ser-2789, Thr-2814 and Thr-2822. Ser-2789 is a DNA damage-inducible phosphorylation site (inducible with ionizing radiation, IR).

It localises to the nucleus. The protein localises to the nucleolus. It catalyses the reaction L-seryl-[protein] + ATP = O-phospho-L-seryl-[protein] + ADP + H(+). It carries out the reaction L-threonyl-[protein] + ATP = O-phospho-L-threonyl-[protein] + ADP + H(+). Inhibited by wortmannin. Activity of the enzyme seems to be attenuated by autophosphorylation. Functionally, serine/threonine-protein kinase that acts as a molecular sensor for DNA damage. Is recruited to DNA ends by the Ku70/Ku80 heterodimer and is involved in DNA non-homologous end joining (NHEJ) required for double-strand break (DSB) repair and V(D)J recombination. This activity is only apparent when DNA damage is administered in G1 phase of the cell cycle. Required for efficient signaling of DNA double-stranded breaks via phosphorylation of H2AX during G1. The polypeptide is DNA-dependent protein kinase catalytic subunit (dnapkcs) (Dictyostelium discoideum (Social amoeba)).